A 113-amino-acid polypeptide reads, in one-letter code: T cell receptor alpha variable 12-2 (113 aa).

Positions 1 to 20 (MKSLRVLLVILWLQLSWVWS) are cleaved as a signal peptide. An Ig-like domain is found at 23 to 113 (KEVEQNSGPL…DSATYLCAVN (91 aa)). The N-linked (GlcNAc...) asparagine glycan is linked to Asn-43. A disulfide bridge links Cys-44 with Cys-110.

Alpha-beta TR is a heterodimer composed of an alpha and beta chain; disulfide-linked. The alpha-beta TR is associated with the transmembrane signaling CD3 coreceptor proteins to form the TR-CD3 (TcR or TCR). The assembly of alpha-beta TR heterodimers with CD3 occurs in the endoplasmic reticulum where a single alpha-beta TR heterodimer associates with one CD3D-CD3E heterodimer, one CD3G-CD3E heterodimer and one CD247 homodimer forming a stable octameric structure. CD3D-CD3E and CD3G-CD3E heterodimers preferentially associate with TR alpha and TR beta chains, respectively. The association of the CD247 homodimer is the last step of TcR assembly in the endoplasmic reticulum and is required for transport to the cell surface.

The protein resides in the cell membrane. In terms of biological role, v region of the variable domain of T cell receptor (TR) alpha chain that participates in the antigen recognition. Alpha-beta T cell receptors are antigen specific receptors which are essential to the immune response and are present on the cell surface of T lymphocytes. Recognize peptide-major histocompatibility (MH) (pMH) complexes that are displayed by antigen presenting cells (APC), a prerequisite for efficient T cell adaptive immunity against pathogens. Binding of alpha-beta TR to pMH complex initiates TR-CD3 clustering on the cell surface and intracellular activation of LCK that phosphorylates the ITAM motifs of CD3G, CD3D, CD3E and CD247 enabling the recruitment of ZAP70. In turn ZAP70 phosphorylates LAT, which recruits numerous signaling molecules to form the LAT signalosome. The LAT signalosome propagates signal branching to three major signaling pathways, the calcium, the mitogen-activated protein kinase (MAPK) kinase and the nuclear factor NF-kappa-B (NF-kB) pathways, leading to the mobilization of transcription factors that are critical for gene expression and essential for T cell growth and differentiation. The T cell repertoire is generated in the thymus, by V-(D)-J rearrangement. This repertoire is then shaped by intrathymic selection events to generate a peripheral T cell pool of self-MH restricted, non-autoaggressive T cells. Post-thymic interaction of alpha-beta TR with the pMH complexes shapes TR structural and functional avidity. This is T cell receptor alpha variable 12-2 from Homo sapiens (Human).